Consider the following 1004-residue polypeptide: MREVILAVHGMTCSACTNTINTQLRALKGVTKCDISLVTNECQVTYDNEVTADSIKEIIEDCGFDCEILRDSEITAISTKEGLLSVQGMTCGSCVSTVTKQVEGIEGVESVVVSLVTEECHVIYEPSKTTLETAREMIEDCGFDSNIIMDGNGNADMTEKTVILKVTKAFEDESPLILSSVSERFQFLLDLGVKSIEISDDMHTLTIKYCCNELGIRDLLRHLERTGYKFTVFSNLDNTTQLRLLSKEDEIRFWKKNSIKSTLLAIICMLLYMIVPMMWPTIVQDRIFPYKETSFVRGLFYRDILGVILASYIQFSVGFYFYKAAWASLKHGSGTMDTLVCVSTTCAYTFSVFSLVHNMFHPSSTGKLPRIVFDTSIMIISYISIGKYLETLAKSQTSTALSKLIQLTPSVCSIISDVERNETKEIPIELLQVNDIVEIKPGMKIPADGIITRGESEIDESLMTGESILVPKKTGFPVIAGSVNGPGHFYFRTTTVGEETKLANIIKVMKEAQLSKAPIQGYADYLASIFVPGILILAVLTFFIWCFILNISANPPVAFTANTKADNFFICLQTATSVVIVACPCALGLATPTAIMVGTGVGAQNGVLIKGGEVLEKFNSITTFVFDKTGTLTTGFMVVKKFLKDSNWVGNVDEDEVLACIKATESISDHPVSKAIIRYCDGLNCNKALNAVVLESEYVLGKGIVSKCQVNGNTYDICIGNEALILEDALKKSGFINSNVDQGNTVSYVSVNGHVFGLFEINDEVKHDSYATVQYLQRNGYETYMITGDNNSAAKRVAREVGISFENVYSDVSPTGKCDLVKKIQDKEGNNKVAVVGDGINDAPALALSDLGIAISTGTEIAIEAADIVILCGNDLNTNSLRGLANAIDISLKTFKRIKLNLFWALCYNIFMIPIAMGVLIPWGITLPPMLAGLAMAFSSVSVVLSSLMLKKWTPPDIESHGISDFKSKFSIGNFWSRLFSTRAIAGEQDIESQAGLMSNEEVL.

Residues 1 to 262 (MREVILAVHG…FWKKNSIKST (262 aa)) lie on the Cytoplasmic side of the membrane. HMA domains follow at residues 2 to 67 (REVI…FDCE) and 80 to 146 (KEGL…FDSN). Residues C13, C16, C91, and C94 each coordinate Cu(+). A helical transmembrane segment spans residues 263-283 (LLAIICMLLYMIVPMMWPTIV). The Lumenal, vesicle segment spans residues 284 to 303 (QDRIFPYKETSFVRGLFYRD). A helical transmembrane segment spans residues 304–324 (ILGVILASYIQFSVGFYFYKA). Residues 325 to 335 (AWASLKHGSGT) lie on the Cytoplasmic side of the membrane. The chain crosses the membrane as a helical span at residues 336-356 (MDTLVCVSTTCAYTFSVFSLV). Residues 357–370 (HNMFHPSSTGKLPR) lie on the Lumenal, vesicle side of the membrane. A helical membrane pass occupies residues 371-391 (IVFDTSIMIISYISIGKYLET). At 392–528 (LAKSQTSTAL…IQGYADYLAS (137 aa)) the chain is on the cytoplasmic side. Residues 529 to 549 (IFVPGILILAVLTFFIWCFIL) form a helical membrane-spanning segment. Residues 550–577 (NISANPPVAFTANTKADNFFICLQTATS) are Lumenal, vesicle-facing. The chain crosses the membrane as a helical span at residues 578-598 (VVIVACPCALGLATPTAIMVG). The Cytoplasmic portion of the chain corresponds to 599 to 901 (TGVGAQNGVL…LKTFKRIKLN (303 aa)). D627 serves as the catalytic 4-aspartylphosphate intermediate. D838 and D842 together coordinate Mg(2+). Residues 902–924 (LFWALCYNIFMIPIAMGVLIPWG) form a helical membrane-spanning segment. The Lumenal, vesicle portion of the chain corresponds to 925–927 (ITL). A helical transmembrane segment spans residues 928 to 950 (PPMLAGLAMAFSSVSVVLSSLML). The Cytoplasmic segment spans residues 951-1004 (KKWTPPDIESHGISDFKSKFSIGNFWSRLFSTRAIAGEQDIESQAGLMSNEEVL).

The protein belongs to the cation transport ATPase (P-type) (TC 3.A.3) family. Type IB subfamily. As to quaternary structure, interacts with the copper chaperone ATX1 via the copper anion.

The protein localises to the golgi apparatus. Its subcellular location is the trans-Golgi network membrane. The enzyme catalyses Cu(+)(in) + ATP + H2O = Cu(+)(out) + ADP + phosphate + H(+). Its function is as follows. Copper-transporting P-type ATPase necessary for the proper uptake of iron. Required for export of copper from cytosol into extracytosolic compartment. Retrieves copper from the metallochaperone ATX1 and incorporates it into trans-Golgi vesicles where they are acquired by the cell-surface iron transporter FET3. Required the production of inositolphosphorylceramide D, probably by delivering copper to a yet to be identified enzyme. This chain is Copper-transporting ATPase, found in Saccharomyces cerevisiae (strain ATCC 204508 / S288c) (Baker's yeast).